Reading from the N-terminus, the 550-residue chain is Glucose-6-phosphate isomerase (550 aa).

The active-site Proton donor is Glu355. Catalysis depends on residues His386 and Lys512.

This sequence belongs to the GPI family.

The protein resides in the cytoplasm. It catalyses the reaction alpha-D-glucose 6-phosphate = beta-D-fructose 6-phosphate. It functions in the pathway carbohydrate biosynthesis; gluconeogenesis. Its pathway is carbohydrate degradation; glycolysis; D-glyceraldehyde 3-phosphate and glycerone phosphate from D-glucose: step 2/4. Its function is as follows. Catalyzes the reversible isomerization of glucose-6-phosphate to fructose-6-phosphate. This Rhodococcus opacus (strain B4) protein is Glucose-6-phosphate isomerase.